The primary structure comprises 149 residues: Ribonuclease pancreatic (149 aa).

The N-terminal stretch at 1–25 (MGLEKSLILFPLFVLLLGWVQPSLG) is a signal peptide. The disordered stretch occupies residues 30–49 (AQKFERQHMDSSGSSNNSPT). Substrate is bound by residues Lys32 and Arg35. The active-site Proton acceptor is the His37. The span at 39 to 49 (DSSGSSNNSPT) shows a compositional bias: polar residues. 4 cysteine pairs are disulfide-bonded: Cys51-Cys109, Cys65-Cys120, Cys83-Cys135, and Cys90-Cys97. Residue 66–70 (KPVNT) participates in substrate binding. An N-linked (GlcNAc...) asparagine glycan is attached at Asn87. Lys91 contacts substrate. His144 (proton donor) is an active-site residue.

It belongs to the pancreatic ribonuclease family. Monomer. Interacts with and forms tight 1:1 complexes with RNH1. Dimerization of two such complexes may occur. Interaction with RNH1 inhibits this protein. Pancreas.

It is found in the secreted. The catalysed reaction is an [RNA] containing cytidine + H2O = an [RNA]-3'-cytidine-3'-phosphate + a 5'-hydroxy-ribonucleotide-3'-[RNA].. It catalyses the reaction an [RNA] containing uridine + H2O = an [RNA]-3'-uridine-3'-phosphate + a 5'-hydroxy-ribonucleotide-3'-[RNA].. In terms of biological role, endonuclease that catalyzes the cleavage of RNA on the 3' side of pyrimidine nucleotides. Acts on single-stranded and double-stranded RNA. This is Ribonuclease pancreatic (Rnase1) from Mus pahari (Gairdner's shrew-mouse).